A 500-amino-acid chain; its full sequence is Probable serine carboxypeptidase CPVL (500 aa).

An N-terminal signal peptide occupies residues 1–23 (MKVSLSFLLTILIVIITIKVNLS). N-linked (GlcNAc...) asparagine glycans are attached at residues Asn110 and Asn161. Ser233 is a catalytic residue. Residues Asn333 and Asn360 are each glycosylated (N-linked (GlcNAc...) asparagine). Residues Asp414 and His474 contribute to the active site.

Belongs to the peptidase S10 family.

The protein resides in the secreted. Its function is as follows. May be involved in the digestion of phagocytosed particles in the lysosome, participation in an inflammatory protease cascade, and trimming of peptides for antigen presentation. The sequence is that of Probable serine carboxypeptidase CPVL (cpvl) from Dictyostelium discoideum (Social amoeba).